Here is a 357-residue protein sequence, read N- to C-terminus: Aurora kinase A- and ninein-interacting protein (357 aa).

Residues 72-93 (TSQQGKTNGADQRSVSSHTESQ) show a composition bias toward polar residues. A disordered region spans residues 72 to 102 (TSQQGKTNGADQRSVSSHTESQTNKESKEDA). Positions 189–357 (QKEGEDSSCE…EGNQVIRHQA (169 aa)) are interaction with AURKA. The segment at 281–357 (KDSWSQLFTE…EGNQVIRHQA (77 aa)) is interaction with RBBP8/CtIP. Serine 292 carries the post-translational modification Phosphoserine.

It belongs to the AUNIP family. In terms of assembly, interacts (via C-terminus) with AURKA (via C-terminus). Interacts (via N-terminus) with NIN; this interaction blocks NIN phosphorylation by both AURKA and GSK3B. Identified in a complex with NIN and AURKA. Interacts with RBBP8/CtIP.

The protein resides in the nucleus. The protein localises to the chromosome. It localises to the cytoplasm. It is found in the cytoskeleton. Its subcellular location is the microtubule organizing center. The protein resides in the centrosome. The protein localises to the spindle pole. Functionally, DNA-binding protein that accumulates at DNA double-strand breaks (DSBs) following DNA damage and promotes DNA resection and homologous recombination. Serves as a sensor of DNA damage: binds DNA with a strong preference for DNA substrates that mimic structures generated at stalled replication forks, and anchors RBBP8/CtIP to DSB sites to promote DNA end resection and ensuing homologous recombination repair. Inhibits non-homologous end joining (NHEJ). Required for the dynamic movement of AURKA at the centrosomes and spindle apparatus during the cell cycle. The protein is Aurora kinase A- and ninein-interacting protein of Bos taurus (Bovine).